We begin with the raw amino-acid sequence, 379 residues long: UDP-4-amino-4-deoxy-L-arabinose--oxoglutarate aminotransferase (379 aa).

Lys182 carries the N6-(pyridoxal phosphate)lysine modification.

The protein belongs to the DegT/DnrJ/EryC1 family. ArnB subfamily. Homodimer. Pyridoxal 5'-phosphate serves as cofactor.

It carries out the reaction UDP-4-amino-4-deoxy-beta-L-arabinose + 2-oxoglutarate = UDP-beta-L-threo-pentopyranos-4-ulose + L-glutamate. It participates in nucleotide-sugar biosynthesis; UDP-4-deoxy-4-formamido-beta-L-arabinose biosynthesis; UDP-4-deoxy-4-formamido-beta-L-arabinose from UDP-alpha-D-glucuronate: step 2/3. Its pathway is bacterial outer membrane biogenesis; lipopolysaccharide biosynthesis. Its function is as follows. Catalyzes the conversion of UDP-4-keto-arabinose (UDP-Ara4O) to UDP-4-amino-4-deoxy-L-arabinose (UDP-L-Ara4N). The modified arabinose is attached to lipid A and is required for resistance to polymyxin and cationic antimicrobial peptides. The protein is UDP-4-amino-4-deoxy-L-arabinose--oxoglutarate aminotransferase of Sodalis glossinidius (strain morsitans).